A 366-amino-acid chain; its full sequence is MAIISSKKQPPEPNGQPNKRPESAPAAPKEKVLQPEAAIDEQGKQEESIRPQKFADYIGQKDLKDVLDIAIKAAKSRGEVLDHLLLYGPPGLGKTTMAMILASEMGVNYKITSAPALERPRDIVGLLVNLKPGDILFIDEIHRLSRMTEEILYPAMEDYRLDITVGKGSSARIRSIPLSKFTLVGATTRVGALTSPLRDRFGLIQKLRFYEVDELSQIVLRSAQLLQTQVTDDGATEIARRSRGTPRIANRLLKRVRDYAQVKSCTEVSQNIAAEALQLFQVDPCGLDWTDRRMLSVIIEQFNGGPVGLETIAAATGEDTQTIEEVYEPYLMQIGYLSRTPRGRTATKAAYKHMGFTPPNEQLSLL.

Residues 1–49 (MAIISSKKQPPEPNGQPNKRPESAPAAPKEKVLQPEAAIDEQGKQEESI) form a disordered region. The interval 13–210 (PNGQPNKRPE…FGLIQKLRFY (198 aa)) is large ATPase domain (RuvB-L). ATP contacts are provided by residues isoleucine 49, arginine 50, glycine 91, lysine 94, threonine 95, threonine 96, 157 to 159 (EDY), arginine 200, tyrosine 210, and arginine 247. Threonine 95 is a binding site for Mg(2+). The tract at residues 211–281 (EVDELSQIVL…IAAEALQLFQ (71 aa)) is small ATPAse domain (RuvB-S). The segment at 284-366 (PCGLDWTDRR…TPPNEQLSLL (83 aa)) is head domain (RuvB-H). 2 residues coordinate DNA: arginine 339 and arginine 344.

The protein belongs to the RuvB family. As to quaternary structure, homohexamer. Forms an RuvA(8)-RuvB(12)-Holliday junction (HJ) complex. HJ DNA is sandwiched between 2 RuvA tetramers; dsDNA enters through RuvA and exits via RuvB. An RuvB hexamer assembles on each DNA strand where it exits the tetramer. Each RuvB hexamer is contacted by two RuvA subunits (via domain III) on 2 adjacent RuvB subunits; this complex drives branch migration. In the full resolvosome a probable DNA-RuvA(4)-RuvB(12)-RuvC(2) complex forms which resolves the HJ.

Its subcellular location is the cytoplasm. The enzyme catalyses ATP + H2O = ADP + phosphate + H(+). In terms of biological role, the RuvA-RuvB-RuvC complex processes Holliday junction (HJ) DNA during genetic recombination and DNA repair, while the RuvA-RuvB complex plays an important role in the rescue of blocked DNA replication forks via replication fork reversal (RFR). RuvA specifically binds to HJ cruciform DNA, conferring on it an open structure. The RuvB hexamer acts as an ATP-dependent pump, pulling dsDNA into and through the RuvAB complex. RuvB forms 2 homohexamers on either side of HJ DNA bound by 1 or 2 RuvA tetramers; 4 subunits per hexamer contact DNA at a time. Coordinated motions by a converter formed by DNA-disengaged RuvB subunits stimulates ATP hydrolysis and nucleotide exchange. Immobilization of the converter enables RuvB to convert the ATP-contained energy into a lever motion, pulling 2 nucleotides of DNA out of the RuvA tetramer per ATP hydrolyzed, thus driving DNA branch migration. The RuvB motors rotate together with the DNA substrate, which together with the progressing nucleotide cycle form the mechanistic basis for DNA recombination by continuous HJ branch migration. Branch migration allows RuvC to scan DNA until it finds its consensus sequence, where it cleaves and resolves cruciform DNA. The chain is Holliday junction branch migration complex subunit RuvB from Trichormus variabilis (strain ATCC 29413 / PCC 7937) (Anabaena variabilis).